We begin with the raw amino-acid sequence, 288 residues long: 33 kDa chaperonin (288 aa).

Intrachain disulfides connect Cys-236–Cys-238 and Cys-269–Cys-272.

Belongs to the HSP33 family. Under oxidizing conditions two disulfide bonds are formed involving the reactive cysteines. Under reducing conditions zinc is bound to the reactive cysteines and the protein is inactive.

It is found in the cytoplasm. Its function is as follows. Redox regulated molecular chaperone. Protects both thermally unfolding and oxidatively damaged proteins from irreversible aggregation. Plays an important role in the bacterial defense system toward oxidative stress. In Syntrophotalea carbinolica (strain DSM 2380 / NBRC 103641 / GraBd1) (Pelobacter carbinolicus), this protein is 33 kDa chaperonin.